Reading from the N-terminus, the 101-residue chain is NAD(P)H-quinone oxidoreductase subunit 4L, chloroplastic (101 aa).

3 helical membrane-spanning segments follow: residues 2–22, 32–52, and 61–81; these read IFQS…YGLL, MSLE…SNFV, and VLAL…LAII.

This sequence belongs to the complex I subunit 4L family. In terms of assembly, NDH is composed of at least 16 different subunits, 5 of which are encoded in the nucleus.

Its subcellular location is the plastid. The protein resides in the chloroplast thylakoid membrane. The catalysed reaction is a plastoquinone + NADH + (n+1) H(+)(in) = a plastoquinol + NAD(+) + n H(+)(out). It catalyses the reaction a plastoquinone + NADPH + (n+1) H(+)(in) = a plastoquinol + NADP(+) + n H(+)(out). Functionally, NDH shuttles electrons from NAD(P)H:plastoquinone, via FMN and iron-sulfur (Fe-S) centers, to quinones in the photosynthetic chain and possibly in a chloroplast respiratory chain. The immediate electron acceptor for the enzyme in this species is believed to be plastoquinone. Couples the redox reaction to proton translocation, and thus conserves the redox energy in a proton gradient. The polypeptide is NAD(P)H-quinone oxidoreductase subunit 4L, chloroplastic (Nephroselmis olivacea (Green alga)).